The sequence spans 430 residues: MPVTTPTKMATLTTKQMWQTIKDYFGDGFVTGSAPISYNVHTCDMQLQPDSGIHAASDGIHYGVQISEDSMPLFSIMGDTAAPPCTCHRVDEIVKHIDEFLERAPEALPDDGAITSGKPCDTNPDQVSLYAMRDSLSWWVHWGGNLRPEHYWKQIYIGFAAIPDDVQISPREFLDGTYRYLGHTWDDCLSGLEEEGVSPDEIEFANMCMWRQMLTQWLEKADPELLPLLKGKISLMLQYRVLTANTLGCLALFMNATADPKDGPIHYADSSYEMEIASVAQCVTLDMAKEAMGILQGERTEVVAGDRAQRKRELRWIYVRCMQILESQPHAHMLRRYGSAGLHYVPMMDRYLERVSGHTRFPIRDGAARILERFINRAELPKESEDINPNGRSLKVSAKMNGNGQLHHEVNGNAKLHLEAERPDVTTAVG.

Belongs to the terpene synthase family. Alpha-humulene synthase eupE subfamily. Mg(2+) is required as a cofactor.

The enzyme catalyses (2E,6E)-farnesyl diphosphate = alpha-humulene + diphosphate. It participates in secondary metabolite biosynthesis; terpenoid biosynthesis. Its function is as follows. Alpha-humulene synthase; part of the gene cluster that mediates the biosynthesis of xenovulene A, an unusual meroterpenoid that has potent inhibitory effects on the human gamma-aminobutyrate A (GABAA) benzodiazepine receptor. The first step of xenovulene A biosynthesis is the biosynthesis of 3-methylorcinaldehyde performed by the non-reducing polyketide synthase aspks1. The salicylate hydroxylase asL1 then catalyzes the oxidative dearomatization of 3-methylorcinaldehyde to yield a dearomatized hydroxycyclohexadione. The 2-oxoglutarate-dependent dioxygenase asL3 further catalyzes the oxidative ring expansion to provide the first tropolone metabolite. The cytochrome P450 monooxygenase asR2 allows the synthesis of tropolone hemiacetal. In parallel, a previously unrecognised class of terpene cyclase, asR6, produces alpha-humulene from farnesylpyrophosphate (FPP). The putative Diels-Alderase asR5 probably catalyzes the formation of the tropolone-humulene skeleton by linking humulene and the polyketide moiety. Oxidative-ring contractions catalyzed by asL4 and asL6 then processively remove carbon atoms from the polyketide to yield xenovulene A. The polypeptide is Alpha-humulene synthase asR6 (Sarocladium schorii (Acremonium strictum (strain IMI 501407))).